The chain runs to 1695 residues: Sialoadhesin (1695 aa).

A signal peptide spans 1–19; it reads MCVLFSLLLLASVFSLGQT. The Ig-like V-type domain occupies 20-136; sequence TWGVSSPKNV…DVKGTTVTVT (117 aa). The Extracellular segment spans residues 20-1639; that stretch reads TWGVSSPKNV…ALHQLQLFQR (1620 aa). 4 disulfides stabilise this stretch: C36–C166, C41–C98, C160–C218, and C263–C306. Residues Y63, R116, and 122 to 126 contribute to the N-acetylneuraminate site; that span reads SNRWL. Ig-like C2-type domains follow at residues 153–235, 239–321, 326–406, 416–508, 509–594, 602–701, 704–781, 795–890, 894–973, 980–1079, 1081–1161, 1172–1264, 1245–1337, 1342–1439, 1442–1520, and 1534–1627; these read GMER…YLQV, PKGV…SPLS, MAEV…SPLS, PDLT…LDFY, ANVA…TVLT, PTFT…ASFN, ATVL…AQLS, PKLS…FQVR, VQVS…APVS, PRHV…ADFD, QAVR…RPVT, RLTY…MNPS, KANT…ASLQ, PRDA…RLLT, DIRV…ATTS, and PTLI…AYFG. An N-linked (GlcNAc...) asparagine glycan is attached at N159. Residues N266, N299, and N340 are each glycosylated (N-linked (GlcNAc...) asparagine). 2 cysteine pairs are disulfide-bonded: C347–C391 and C434–C492. N-linked (GlcNAc...) asparagine glycosylation occurs at N500. C532 and C576 form a disulfide bridge. A glycan (N-linked (GlcNAc...) asparagine) is linked at N583. A disulfide bond links C625 and C685. 3 N-linked (GlcNAc...) asparagine glycosylation sites follow: N693, N722, and N737. Disulfide bonds link C725/C770 and C813/C872. The Cell attachment site signature appears at 827 to 829; sequence RGD. An N-linked (GlcNAc...) asparagine glycan is attached at N882. 2 cysteine pairs are disulfide-bonded: C912-C956 and C1001-C1063. N-linked (GlcNAc...) asparagine glycans are attached at residues N1090 and N1100. Intrachain disulfides connect C1103/C1145 and C1189/C1237. Residue N1247 is glycosylated (N-linked (GlcNAc...) asparagine). Intrachain disulfides connect C1277/C1320 and C1363/C1422. N-linked (GlcNAc...) asparagine glycosylation is found at N1460 and N1474. 2 disulfide bridges follow: C1463–C1509 and C1552–C1611. Residues 1640 to 1660 traverse the membrane as a helical segment; that stretch reads LLWVLGFLAGFLCLLLGLVAY. At 1661–1695 the chain is on the cytoplasmic side; that stretch reads HTWRKKSSTKLNEDENSAEMATKKNTIQEEVVAAL.

It belongs to the immunoglobulin superfamily. SIGLEC (sialic acid binding Ig-like lectin) family. As to quaternary structure, interacts with CLEC10A. In terms of tissue distribution, detected in lymph node in the subcapsular sinus, interfollicular regions, and T and B-cell boundary (at protein level). Expressed by macrophages in various tissues. Highest expression in spleen and lymph node with lower amounts in lung, liver, bone marrow, heart and skin. No expression in thymus, kidney, brain or small intestine.

Its subcellular location is the cell membrane. The protein localises to the secreted. Macrophage-restricted adhesion molecule that mediates sialic-acid dependent binding to lymphocytes, including granulocytes, monocytes, natural killer cells, B-cells and CD8 T-cells. Plays a crucial role in limiting bacterial dissemination by engaging sialylated bacteria to promote effective phagocytosis and antigen presentation for the adaptive immune response. Mediates the uptake of various enveloped viruses via sialic acid recognition and subsequently induces the formation of intracellular compartments filled with virions (VCCs). In turn, enhances macrophage-to-T-cell transmission of several viruses including murine leukemia virus. Acts as an endocytic receptor mediating clathrin dependent endocytosis. Preferentially binds to alpha-2,3-linked sialic acid. Binds to SPN/CD43 on T-cells. May play a role in hemopoiesis. Plays a role in the inhibition of antiviral innate immune by promoting TBK1 degradation via TYROBP and TRIM27-mediated ubiquitination. This is Sialoadhesin (Siglec1) from Mus musculus (Mouse).